The sequence spans 641 residues: Fructose-1,6-bisphosphatase class 3 (641 aa).

Belongs to the FBPase class 3 family. Mn(2+) is required as a cofactor.

The catalysed reaction is beta-D-fructose 1,6-bisphosphate + H2O = beta-D-fructose 6-phosphate + phosphate. It functions in the pathway carbohydrate biosynthesis; gluconeogenesis. The polypeptide is Fructose-1,6-bisphosphatase class 3 (Bacillus velezensis (strain DSM 23117 / BGSC 10A6 / LMG 26770 / FZB42) (Bacillus amyloliquefaciens subsp. plantarum)).